A 381-amino-acid chain; its full sequence is Putative 2-heptyl-3-hydroxy-4(1H)-quinolone synthase AqdB1 (381 aa).

It belongs to the 3-hydroxybenzoate 6-hydroxylase family.

The enzyme catalyses 2-heptyl-4(1H)-quinolone + NADH + O2 + H(+) = 2-heptyl-3-hydroxy-4(1H)-quinolone + NAD(+) + H2O. In terms of biological role, could be involved in the degradation of the Pseudomonas aeruginosa quorum sensing signal molecule HHQ (2-heptyl-4-quinolone) to anthranilic acid. May catalyze the hydroxylation of HHQ to PQS (2-heptyl-3-hydroxy-4-quinolone). The sequence is that of Putative 2-heptyl-3-hydroxy-4(1H)-quinolone synthase AqdB1 from Rhodococcus erythropolis (Arthrobacter picolinophilus).